Consider the following 1342-residue polypeptide: Subtilisin-like protease 2 (1342 aa).

An N-terminal signal peptide occupies residues 1–18 (MLNIIYVVSLILIKFIFY). Positions 19–687 (KECNNNNNYY…KLYNNKYSFL (669 aa)) are cleaved as a propeptide — inhibition peptide. Disordered regions lie at residues 85–111 (EKKTKGEENEIEKKKENDLEEKKENEI) and 143–171 (ADVSNNDNSGHEENNKHKLNKKNSSNYKN). N-linked (GlcNAc...) asparagine glycosylation is found at N165, N343, N451, N455, and N493. The disordered stretch occupies residues 415–474 (KKSKKEKENTQQKGGNNPNVDINILNNNNNNNNNNNNNSNNNSNSMNDEEINYNNNNNKE). Residues 430-474 (NNPNVDINILNNNNNNNNNNNNNSNNNSNSMNDEEINYNNNNNKE) are compositionally biased toward low complexity. The tract at residues 500–531 (IYHNKNDNSYKNKKEGTGKNNDNNDPNNNNNK) is disordered. A compositionally biased stretch (basic and acidic residues) spans 503 to 516 (NKNDNSYKNKKEGT). The segment covering 518–531 (KNNDNNDPNNNNNK) has biased composition (low complexity). N-linked (GlcNAc...) asparagine glycans are attached at residues N551, N642, and N729. Over 688-1137 (NKFLNIEPLI…LYNLYEYDSH (450 aa)) the chain is Extracellular. Positions 727-1020 (TWNLSIIRVF…DSLVNAEGAV (294 aa)) constitute a Peptidase S8 domain. Active-site charge relay system residues include D755 and H798. N-linked (GlcNAc...) asparagine glycosylation is found at N821, N857, N893, and N951. The Charge relay system role is filled by S961. N-linked (GlcNAc...) asparagine glycans are attached at residues N1010 and N1106. A helical transmembrane segment spans residues 1138–1158 (YLLASVILFFLALLSIFVGMI). Topologically, residues 1159 to 1342 (YMKSRKHSDK…MNQLDDMFMK (184 aa)) are cytoplasmic.

Belongs to the peptidase S8 family. In terms of processing, proteolytically cleaved at the N-terminus to generate a 74kDa intermediate which is further processed into a 72kDa form. The first maturation cleavage is autocatalytic, occurs in the ER and is necessary for the subsequent SUB2 trafficking to the microneme. The second cleavage may be mediated by PMX/plasmepsin X.

It is found in the cell membrane. It localises to the cytoplasmic vesicle. The protein localises to the secretory vesicle. The protein resides in the microneme membrane. The enzyme catalyses Hydrolysis of proteins with broad specificity for peptide bonds, and a preference for a large uncharged residue in P1. Hydrolyzes peptide amides.. Its activity is regulated as follows. Activation may be calcium-dependent. Inhibited by the non-covalent interaction with the cleaved propeptide. Functionally, serine protease which plays an essential role in the shedding of AMA1, MSP1 and MSP7 from the surface of the invading merozoite; this step is essential for productive invasion and the release of the adhesion between the erythrocyte and the merozoite. May cleave TRAMP/PTTRAMP, thereby shedding TRAMP from the merozoite surface during erythrocyte invasion. This chain is Subtilisin-like protease 2, found in Plasmodium falciparum.